Here is a 181-residue protein sequence, read N- to C-terminus: Trafficking protein particle complex subunit 3-like protein (181 aa).

The S-palmitoyl cysteine moiety is linked to residue Cys-68.

The protein belongs to the TRAPP small subunits family. BET3 subfamily. In terms of assembly, homodimer. Component of the multisubunit TRAPP (transport protein particle) complex, which includes at least TRAPPC2, TRAPPC2L, TRAPPC3, TRAPPC3L, TRAPPC4, TRAPPC5, TRAPPC8, TRAPPC9, TRAPPC10, TRAPPC11 and TRAPPC12.

It localises to the golgi apparatus. It is found in the cis-Golgi network. The protein localises to the endoplasmic reticulum. May play a role in vesicular transport from endoplasmic reticulum to Golgi. The sequence is that of Trafficking protein particle complex subunit 3-like protein (Trappc3l) from Mus musculus (Mouse).